We begin with the raw amino-acid sequence, 437 residues long: UDP-glucosyl transferase 79L3 (437 aa).

Residue histidine 18 is the Proton acceptor of the active site. Aspartate 117 serves as the catalytic Charge relay. Residues serine 254, tryptophan 312, valine 313, histidine 330, serine 335, and glutamate 338 each coordinate UDP.

It belongs to the UDP-glycosyltransferase family. Mainly expressed in flowers, flower buds and young leaves, and, to a lesser extent, in old leaves, stems and roots.

Its pathway is secondary metabolite biosynthesis; terpenoid biosynthesis. Functionally, component of the oleanane-type triterpene saponins (e.g. saponarioside A and saponarioside B) biosynthetic pathway, leading to the production of natural products with detergent properties used as traditional sources of soap. A glycosyltransferase that mediates the conversion of QA-triFR to QA-triFRX via the elongation of the C-28 sugar chain with a D-xylose. The polypeptide is UDP-glucosyl transferase 79L3 (Saponaria officinalis (Common soapwort)).